Here is a 500-residue protein sequence, read N- to C-terminus: Histidine--tRNA ligase (500 aa).

This sequence belongs to the class-II aminoacyl-tRNA synthetase family. As to quaternary structure, homodimer.

It localises to the cytoplasm. The enzyme catalyses tRNA(His) + L-histidine + ATP = L-histidyl-tRNA(His) + AMP + diphosphate + H(+). The sequence is that of Histidine--tRNA ligase (hisS) from Mesorhizobium japonicum (strain LMG 29417 / CECT 9101 / MAFF 303099) (Mesorhizobium loti (strain MAFF 303099)).